A 140-amino-acid polypeptide reads, in one-letter code: Sex-regulated protein janus-B (140 aa).

Arginine 42 contributes to the substrate binding site. The active-site Proton acceptor is histidine 69. 110–112 (CKT) serves as a coordination point for substrate.

Belongs to the janus family.

In terms of biological role, janA and janB regulate somatic sex differentiation. This chain is Sex-regulated protein janus-B (janB), found in Drosophila pseudoobscura pseudoobscura (Fruit fly).